Reading from the N-terminus, the 149-residue chain is uncharacterized protein (149 aa).

This is an uncharacterized protein from Archaeoglobus fulgidus (strain ATCC 49558 / DSM 4304 / JCM 9628 / NBRC 100126 / VC-16).